We begin with the raw amino-acid sequence, 719 residues long: Protein psiJ (719 aa).

Positions 1–21 are cleaved as a signal peptide; it reads MVSNLLKGLILFSLFISFLNG. The Extracellular segment spans residues 22 to 653; sequence DDKIFPVTIR…RCQSVAVKAG (632 aa). Asn-46, Asn-59, Asn-86, Asn-113, Asn-301, Asn-372, Asn-435, Asn-457, Asn-562, and Asn-628 each carry an N-linked (GlcNAc...) asparagine glycan. A PA14 domain is found at 112–260; sequence QNQTDPRVFY…KDYCGVCEGT (149 aa). The chain crosses the membrane as a helical span at residues 654–674; it reads VIGGAAIAGVVVGGAVALGLA. At 675–719 the chain is on the cytoplasmic side; sequence LFGAKAGYNHWMSLKNNQMATSSVNPLYEPSPHQGTNPLWEAPPT.

The protein belongs to the prespore-cell-inducing factor family.

The protein localises to the membrane. This chain is Protein psiJ (psiJ), found in Dictyostelium discoideum (Social amoeba).